Reading from the N-terminus, the 501-residue chain is Vitamin D 25-hydroxylase (501 aa).

An N-terminal signal peptide occupies residues 1 to 26 (MWKLWRAEEGAAALGGALFLLLFALG). A250 serves as a coordination point for substrate. Heme is bound at residue C448.

Belongs to the cytochrome P450 family. Homodimer. It depends on heme as a cofactor.

The protein resides in the endoplasmic reticulum membrane. The protein localises to the microsome membrane. It catalyses the reaction calciol + reduced [NADPH--hemoprotein reductase] + O2 = calcidiol + oxidized [NADPH--hemoprotein reductase] + H2O + H(+). It carries out the reaction vitamin D2 + reduced [NADPH--hemoprotein reductase] + O2 = 25-hydroxyvitamin D2 + oxidized [NADPH--hemoprotein reductase] + H2O + H(+). The catalysed reaction is 1alpha-hydroxyvitamin D2 + reduced [NADPH--hemoprotein reductase] + O2 = 1alpha,25-dihydroxyvitamin D2 + oxidized [NADPH--hemoprotein reductase] + H2O + H(+). The enzyme catalyses alfacalcidol + reduced [NADPH--hemoprotein reductase] + O2 = calcitriol + oxidized [NADPH--hemoprotein reductase] + H2O + H(+). The protein operates within hormone biosynthesis; vitamin D biosynthesis. Functionally, a cytochrome P450 monooxygenase involved in activation of vitamin D precursors. Catalyzes hydroxylation at C-25 of both forms of vitamin D, vitamin D(2) and D(3) (calciol). Can metabolize vitamin D analogs/prodrugs 1alpha-hydroxyvitamin D(2) (doxercalciferol) and 1alpha-hydroxyvitamin D(3) (alfacalcidol) forming 25-hydroxy derivatives. Mechanistically, uses molecular oxygen inserting one oxygen atom into a substrate, and reducing the second into a water molecule, with two electrons provided by NADPH via cytochrome P450 reductase (CPR; NADPH-ferrihemoprotein reductase). This is Vitamin D 25-hydroxylase (CYP2R1) from Homo sapiens (Human).